The primary structure comprises 308 residues: GTPase Era (308 aa).

The Era-type G domain maps to 9–179; the sequence is RAGFVALIGE…RAWLGASLPE (171 aa). The G1 stretch occupies residues 17-24; sequence GEPNAGKS. 17–24 provides a ligand contact to GTP; sequence GEPNAGKS. The interval 43-47 is G2; it reads QTTRA. The tract at residues 64–67 is G3; that stretch reads DTPG. Residues 64–68 and 129–132 contribute to the GTP site; these read DTPGL and NKID. The G4 stretch occupies residues 129 to 132; the sequence is NKID. The interval 158–160 is G5; it reads ISA. In terms of domain architecture, KH type-2 spans 210-287; that stretch reads LHQELPYQLT…HLFLQVKVRP (78 aa).

It belongs to the TRAFAC class TrmE-Era-EngA-EngB-Septin-like GTPase superfamily. Era GTPase family. Monomer.

The protein resides in the cytoplasm. It is found in the cell inner membrane. Its function is as follows. An essential GTPase that binds both GDP and GTP, with rapid nucleotide exchange. Plays a role in 16S rRNA processing and 30S ribosomal subunit biogenesis and possibly also in cell cycle regulation and energy metabolism. In Dinoroseobacter shibae (strain DSM 16493 / NCIMB 14021 / DFL 12), this protein is GTPase Era.